The following is a 344-amino-acid chain: Type II methyltransferase M.FnuDI (344 aa).

The region spanning Met1–Lys330 is the SAM-dependent MTase C5-type domain. The active site involves Cys71.

It belongs to the class I-like SAM-binding methyltransferase superfamily. C5-methyltransferase family.

The enzyme catalyses a 2'-deoxycytidine in DNA + S-adenosyl-L-methionine = a 5-methyl-2'-deoxycytidine in DNA + S-adenosyl-L-homocysteine + H(+). In terms of biological role, a methylase, recognizes the double-stranded sequence 5'-GGCC-3', methylates C-? on both strands, and protects the DNA from cleavage by the FnuDI endonuclease. The chain is Type II methyltransferase M.FnuDI (fnuDIM) from Fusobacterium nucleatum.